The chain runs to 527 residues: Bifunctional purine biosynthesis protein PurH (527 aa).

The 148-residue stretch at 9 to 156 (MARKPIRRAL…KNHPSVAVVT (148 aa)) folds into the MGS-like domain.

It belongs to the PurH family.

It carries out the reaction (6R)-10-formyltetrahydrofolate + 5-amino-1-(5-phospho-beta-D-ribosyl)imidazole-4-carboxamide = 5-formamido-1-(5-phospho-D-ribosyl)imidazole-4-carboxamide + (6S)-5,6,7,8-tetrahydrofolate. It catalyses the reaction IMP + H2O = 5-formamido-1-(5-phospho-D-ribosyl)imidazole-4-carboxamide. It participates in purine metabolism; IMP biosynthesis via de novo pathway; 5-formamido-1-(5-phospho-D-ribosyl)imidazole-4-carboxamide from 5-amino-1-(5-phospho-D-ribosyl)imidazole-4-carboxamide (10-formyl THF route): step 1/1. The protein operates within purine metabolism; IMP biosynthesis via de novo pathway; IMP from 5-formamido-1-(5-phospho-D-ribosyl)imidazole-4-carboxamide: step 1/1. The sequence is that of Bifunctional purine biosynthesis protein PurH from Mycobacterium leprae (strain Br4923).